Reading from the N-terminus, the 604-residue chain is Choline transporter-like protein 3 (604 aa).

2 N-linked (GlcNAc...) asparagine glycosylation sites follow: Asn-90 and Asn-103. 5 helical membrane passes run Asp-165–Phe-185, Ile-195–Tyr-215, Leu-237–Leu-257, Leu-286–Leu-306, and Tyr-330–Gln-350. N-linked (GlcNAc...) asparagine glycans are attached at residues Asn-454 and Asn-472. 2 helical membrane-spanning segments follow: residues Phe-485 to Ala-505 and Val-514 to Leu-534. A compositionally biased stretch (polar residues) spans Asn-581 to Pro-592. The segment at Asn-581 to Arg-604 is disordered.

Belongs to the CTL (choline transporter-like) family. Expressed in colon, kidney and ileum.

The protein resides in the membrane. In Rattus norvegicus (Rat), this protein is Choline transporter-like protein 3 (Slc44a3).